The primary structure comprises 269 residues: tRNA (guanine-N(7)-)-methyltransferase (269 aa).

Residues methionine 1–leucine 38 form a disordered region. Positions 91, 116, 143, and 166 each coordinate S-adenosyl-L-methionine. Residue aspartate 166 is part of the active site. Residues lysine 170, aspartate 202, and threonine 247 to glutamate 250 contribute to the substrate site.

The protein belongs to the class I-like SAM-binding methyltransferase superfamily. TrmB family.

The catalysed reaction is guanosine(46) in tRNA + S-adenosyl-L-methionine = N(7)-methylguanosine(46) in tRNA + S-adenosyl-L-homocysteine. The protein operates within tRNA modification; N(7)-methylguanine-tRNA biosynthesis. In terms of biological role, catalyzes the formation of N(7)-methylguanine at position 46 (m7G46) in tRNA. This chain is tRNA (guanine-N(7)-)-methyltransferase, found in Nocardia farcinica (strain IFM 10152).